Consider the following 285-residue polypeptide: Probable enoyl-CoA hydratase echA12 (285 aa).

Belongs to the enoyl-CoA hydratase/isomerase family.

It catalyses the reaction a (3S)-3-hydroxyacyl-CoA = a (2E)-enoyl-CoA + H2O. The catalysed reaction is a 4-saturated-(3S)-3-hydroxyacyl-CoA = a (3E)-enoyl-CoA + H2O. Functionally, could possibly oxidize fatty acids using specific components. The chain is Probable enoyl-CoA hydratase echA12 (echA12) from Mycobacterium bovis (strain ATCC BAA-935 / AF2122/97).